A 359-amino-acid chain; its full sequence is Mandelate racemase (359 aa).

Lys-166 (proton acceptor; specific for S-mandelate) is an active-site residue. Residues Asp-195, Glu-221, and Glu-247 each coordinate Mg(2+). Residue His-297 is the Proton acceptor; specific for R-mandelate of the active site. Position 317 (Glu-317) interacts with substrate.

The protein belongs to the mandelate racemase/muconate lactonizing enzyme family. As to quaternary structure, homooctamer. Requires Mg(2+) as cofactor.

The enzyme catalyses (S)-mandelate = (R)-mandelate. The protein operates within aromatic compound metabolism; (R)-mandelate degradation; benzoate from (R)-mandelate: step 1/4. This chain is Mandelate racemase (mdlA), found in Pseudomonas putida (Arthrobacter siderocapsulatus).